The following is a 423-amino-acid chain: Serpin B12 (423 aa).

Residues 63 to 72 (LSKDEHKEPN) show a composition bias toward basic and acidic residues. The disordered stretch occupies residues 63 to 106 (LSKDEHKEPNDPSPQSESKASDSSLEGQKQTSASQDQQGESTND). Positions 75–106 (SPQSESKASDSSLEGQKQTSASQDQQGESTND) are enriched in polar residues.

This sequence belongs to the serpin family. Ov-serpin subfamily. Interacts with SLFN12; as part of a pathway regulating cell differentiation.

It localises to the cytoplasm. Functionally, inhibits trypsin and plasmin, but not thrombin, coagulation factor Xa, or urokinase-type plasminogen activator. May play a role in cell differentiation. The chain is Serpin B12 (Serpinb12) from Mus musculus (Mouse).